Here is a 1528-residue protein sequence, read N- to C-terminus: Multidrug resistance-associated protein 1 (1528 aa).

Residues M1–F33 lie on the Extracellular side of the membrane. A glycan (N-linked (GlcNAc...) asparagine) is linked at N19. The chain crosses the membrane as a helical span at residues Q34 to F54. Topologically, residues F55–K74 are cytoplasmic. The helical transmembrane segment at T75–E95 threads the bilayer. The Extracellular segment spans residues R96–V100. The helical transmembrane segment at L101–T121 threads the bilayer. Residues F122–Q133 are Cytoplasmic-facing. Residues S134–R154 form a helical membrane-spanning segment. The Extracellular segment spans residues S155–D172. A helical membrane pass occupies residues S173 to D193. Residues C194 to V317 are Cytoplasmic-facing. Y277 carries the post-translational modification Phosphotyrosine. S290 carries the post-translational modification Phosphoserine. The chain crosses the membrane as a helical span at residues L318–L338. Residues F326 to Q609 enclose the ABC transmembrane type-1 1 domain. Over M339–G364 the chain is Extracellular. The chain crosses the membrane as a helical span at residues Y365 to Y385. At F386–Y441 the chain is on the cytoplasmic side. Residues I442–S462 form a helical membrane-spanning segment. Residues L463–P465 are Extracellular-facing. The helical transmembrane segment at S466–M486 threads the bilayer. Residues K487–A548 are Cytoplasmic-facing. The residue at position 504 (K504) is an N6-succinyllysine. The chain crosses the membrane as a helical span at residues V549–F569. The Extracellular segment spans residues V570–N591. A helical transmembrane segment spans residues I592–V612. Residues S613–M963 lie on the Cytoplasmic side of the membrane. An ABC transporter 1 domain is found at I644–T868. G678–S685 contacts ATP. Disordered regions lie at residues L876–N895 and R909–A929. Phosphoserine occurs at positions 878, 882, 912, and 927. Positions H910 to A929 are enriched in polar residues. Residues K964–S984 traverse the membrane as a helical segment. Residues T971–T1253 enclose the ABC transmembrane type-1 2 domain. At A985 to L1022 the chain is on the extracellular side. An N-linked (GlcNAc...) asparagine glycan is attached at N1003. Residues Q1023 to R1043 traverse the membrane as a helical segment. The Cytoplasmic segment spans residues R1044–Q1086. The helical transmembrane segment at V1087 to L1107 threads the bilayer. Residue A1108 is a topological domain, extracellular. The helical transmembrane segment at T1109–F1129 threads the bilayer. At Y1130–L1200 the chain is on the cytoplasmic side. A helical transmembrane segment spans residues E1201–S1221. Residues L1222 to S1223 lie on the Extracellular side of the membrane. The chain crosses the membrane as a helical span at residues A1224–L1244. The Cytoplasmic portion of the chain corresponds to V1245–V1528. The region spanning V1290 to D1524 is the ABC transporter 2 domain. Residue G1324 to S1331 participates in ATP binding.

It belongs to the ABC transporter superfamily. ABCC family. Conjugate transporter (TC 3.A.1.208) subfamily.

It is found in the cell membrane. Its subcellular location is the basolateral cell membrane. The catalysed reaction is ATP + H2O + xenobioticSide 1 = ADP + phosphate + xenobioticSide 2.. It carries out the reaction an S-substituted glutathione(in) + ATP + H2O = an S-substituted glutathione(out) + ADP + phosphate + H(+). The enzyme catalyses leukotriene C4(in) + ATP + H2O = leukotriene C4(out) + ADP + phosphate + H(+). It catalyses the reaction sphing-4-enine 1-phosphate(in) + ATP + H2O = sphing-4-enine 1-phosphate(out) + ADP + phosphate + H(+). The catalysed reaction is 17beta-estradiol 17-O-(beta-D-glucuronate)(in) + ATP + H2O = 17beta-estradiol 17-O-(beta-D-glucuronate)(out) + ADP + phosphate + H(+). It carries out the reaction vincristine(in) + ATP + H2O = vincristine(out) + ADP + phosphate + H(+). The enzyme catalyses daunorubicin(in) + ATP + H2O = daunorubicin(out) + ADP + phosphate + H(+). It catalyses the reaction 2',3'-cGAMP(in) + ATP + H2O = 2',3'-cGAMP(out) + ADP + phosphate + H(+). The catalysed reaction is S-[(2E,6E,10E)-geranylgeranyl]-L-glutathione(in) + ATP + H2O = S-[(2E,6E,10E)-geranylgeranyl]-L-glutathione(out) + ADP + phosphate + H(+). It carries out the reaction prostaglandin A2-S-(R)-glutathione(in) + ATP + H2O = prostaglandin A2-S-(R)-glutathione(out) + ADP + phosphate + H(+). The enzyme catalyses prostaglandin A2-S-(S)-glutathione(in) + ATP + H2O = prostaglandin A2-S-(S)-glutathione(out) + ADP + phosphate + H(+). MK 571 inhibits sphingosine 1-phosphate and leukotriene C4 export. In terms of biological role, mediates export of organic anions and drugs from the cytoplasm. Mediates ATP-dependent transport of glutathione and glutathione conjugates, leukotriene C4, estradiol-17-beta-o-glucuronide, methotrexate, antiviral drugs and other xenobiotics. Confers resistance to anticancer drugs by decreasing accumulation of drugs in cells, and by mediating ATP- and GSH-dependent drug export. Hydrolyzes ATP with low efficiency. Catalyzes the export of sphingosine 1-phosphate from mast cells independently of their degranulation. Participates in inflammatory response by allowing export of leukotriene C4 from leukotriene C4-synthesizing cells. Mediates ATP-dependent, GSH-independent cyclic GMP-AMP (cGAMP) export. Thus, by limiting intracellular cGAMP concentrations negatively regulates the cGAS-STING pathway. Exports S-geranylgeranyl-glutathione (GGG) in lymphoid cells and stromal compartments of lymphoid organs. ABCC1 (via extracellular transport) with GGT5 (via GGG catabolism) establish GGG gradients within lymphoid tissues to position P2RY8-positive lymphocytes at germinal centers in lymphoid follicles and restrict their chemotactic transmigration from blood vessels to the bone marrow parenchyma. Mediates basolateral export of GSH-conjugated R- and S-prostaglandin A2 diastereomers in polarized epithelial cells. This Mus musculus (Mouse) protein is Multidrug resistance-associated protein 1.